A 121-amino-acid chain; its full sequence is Anther-specific protein SF2 (121 aa).

Residues 1–21 (MANNSVSYLVLLLLVFVLAIS) form the signal peptide. Residue asparagine 115 is glycosylated (N-linked (GlcNAc...) asparagine).

In terms of tissue distribution, epidermal anther cells.

The protein localises to the secreted. The protein resides in the cell wall. Anther-specific cell wall protein which could contribute to the cell wall architecture of epidermal anther cells via intermolecular disulfide bridges. The chain is Anther-specific protein SF2 from Helianthus annuus (Common sunflower).